Consider the following 288-residue polypeptide: MAEKKQWHETLHDQFGQYFAVDNVLYHEKTDHQDLIIFENAAFGRVMALDGVVQTTERDEFIYHEMMTHVPLLAHGHAKHVLIIGGGDGAMLREVTRHKNVESITMVEIDAGVVSFCRQYLPNHNAGSYDDPRFKLVIDDGVNFVNQTNQTFDVIISDCTDPIGPGESLFTSAFYEGCKRCLNPGGIFVAQNGVCFLQQEEAIDSHRKLSHYFSDVGFYQAAIPTYYGGIMTFAWATDNDALRHLSTEIIQARFLASGLKCRYYNPAVHTAAFALPQYLQDALASQPS.

The PABS domain occupies 9–238 (ETLHDQFGQY…GIMTFAWATD (230 aa)). An S-methyl-5'-thioadenosine-binding site is contributed by glutamine 33. Histidine 64 and aspartate 88 together coordinate spermidine. S-methyl-5'-thioadenosine contacts are provided by residues glutamate 108 and 140–141 (DG). The active-site Proton acceptor is aspartate 158. Position 158–161 (158–161 (DCTD)) interacts with spermidine. Proline 165 is an S-methyl-5'-thioadenosine binding site.

The protein belongs to the spermidine/spermine synthase family. As to quaternary structure, homodimer or homotetramer.

It is found in the cytoplasm. The catalysed reaction is S-adenosyl 3-(methylsulfanyl)propylamine + putrescine = S-methyl-5'-thioadenosine + spermidine + H(+). Its pathway is amine and polyamine biosynthesis; spermidine biosynthesis; spermidine from putrescine: step 1/1. Functionally, catalyzes the irreversible transfer of a propylamine group from the amino donor S-adenosylmethioninamine (decarboxy-AdoMet) to putrescine (1,4-diaminobutane) to yield spermidine. The chain is Polyamine aminopropyltransferase from Escherichia coli (strain UTI89 / UPEC).